A 658-amino-acid polypeptide reads, in one-letter code: ATP-dependent zinc metalloprotease FtsH 4 (658 aa).

Residues 1–22 (MREPTNRQGSPGPGEPRPPAQG) form a disordered region. Topologically, residues 1 to 28 (MREPTNRQGSPGPGEPRPPAQGRPRFPT) are cytoplasmic. A helical membrane pass occupies residues 29–49 (WILWVALLALALWNVYTFFWP). The Extracellular portion of the chain corresponds to 50-149 (SSGARLNIPY…TVKIDQAGGS (100 aa)). The segment at 95-114 (QVLSPGDPVPPGTSPNEIRT) is disordered. The helical transmembrane segment at 150–170 (VWPSLLATIVPLFLFIGLMVY) threads the bilayer. Residues 171 to 658 (LGRSMSRGQQ…AAPAAAADSV (488 aa)) are Cytoplasmic-facing. An ATP-binding site is contributed by 243–250 (GPPGTGKT). A Zn(2+)-binding site is contributed by H464. Residue E465 is part of the active site. Residues H468 and D540 each contribute to the Zn(2+) site.

In the central section; belongs to the AAA ATPase family. This sequence in the C-terminal section; belongs to the peptidase M41 family. As to quaternary structure, homohexamer. Requires Zn(2+) as cofactor.

Its subcellular location is the cell membrane. In terms of biological role, acts as a processive, ATP-dependent zinc metallopeptidase for both cytoplasmic and membrane proteins. Plays a role in the quality control of integral membrane proteins. This is ATP-dependent zinc metalloprotease FtsH 4 (ftsh4) from Sphaerobacter thermophilus (strain ATCC 49802 / DSM 20745 / KCCM 41009 / NCIMB 13125 / S 6022).